Reading from the N-terminus, the 380-residue chain is Cytochrome b (380 aa).

A run of 4 helical transmembrane segments spans residues 33-53 (FGSL…FLAM), 77-98 (WLIR…FLHV), 113-133 (WNMG…GYVL), and 178-198 (FFAF…VHLL). Residues His-83 and His-97 each coordinate heme b. Residues His-182 and His-196 each coordinate heme b. Residue His-201 participates in a ubiquinone binding. 4 consecutive transmembrane segments (helical) span residues 226–246 (IKDF…VLFF), 288–308 (LGGV…PLLH), 320–340 (ITQT…WIGG), and 347–367 (FIMI…IFMP).

The protein belongs to the cytochrome b family. The cytochrome bc1 complex contains 11 subunits: 3 respiratory subunits (MT-CYB, CYC1 and UQCRFS1), 2 core proteins (UQCRC1 and UQCRC2) and 6 low-molecular weight proteins (UQCRH/QCR6, UQCRB/QCR7, UQCRQ/QCR8, UQCR10/QCR9, UQCR11/QCR10 and a cleavage product of UQCRFS1). This cytochrome bc1 complex then forms a dimer. Heme b serves as cofactor.

Its subcellular location is the mitochondrion inner membrane. Component of the ubiquinol-cytochrome c reductase complex (complex III or cytochrome b-c1 complex) that is part of the mitochondrial respiratory chain. The b-c1 complex mediates electron transfer from ubiquinol to cytochrome c. Contributes to the generation of a proton gradient across the mitochondrial membrane that is then used for ATP synthesis. The protein is Cytochrome b (MT-CYB) of Chionomys roberti (Robert's snow vole).